The chain runs to 353 residues: Guanine nucleotide-binding protein subunit alpha (353 aa).

The segment at 1–25 (MGCGMSTEDKEGKARNEEIENQLKR) is disordered. G2 carries the N-myristoyl glycine lipid modification. Residue C3 is the site of S-palmitoyl cysteine attachment. The span at 7-25 (TEDKEGKARNEEIENQLKR) shows a compositional bias: basic and acidic residues. The 322-residue stretch at 32-353 (NEIKMLLLGA…QENLRLCGLI (322 aa)) folds into the G-alpha domain. Positions 35 to 48 (KMLLLGAGESGKST) are G1 motif. GTP is bound by residues E43, S44, G45, K46, S47, T48, D150, L175, T181, G203, N269, K270, D272, and A325. S47 is a Mg(2+) binding site. A G2 motif region spans residues 173–181 (DVLRSRVKT). Position 181 (T181) interacts with Mg(2+). The interval 196 to 205 (YRMFDVGGQR) is G3 motif. The G4 motif stretch occupies residues 265–272 (ILFLNKID). A G5 motif region spans residues 323 to 328 (TCATDT).

This sequence belongs to the G-alpha family. G(q) subfamily. As to quaternary structure, g proteins are composed of 3 units; alpha, beta and gamma. The alpha chain contains the guanine nucleotide binding site. Mg(2+) serves as cofactor.

In terms of biological role, guanine nucleotide-binding proteins (G proteins) are involved as modulators or transducers in various transmembrane signaling systems. The polypeptide is Guanine nucleotide-binding protein subunit alpha (fadA) (Emericella nidulans (strain FGSC A4 / ATCC 38163 / CBS 112.46 / NRRL 194 / M139) (Aspergillus nidulans)).